The sequence spans 408 residues: MDKLLERFLNYVSLDTQSKAGVRQVPSTEGQWKLLHLLKEQLEEMGLINVTLSEKGTLMATLPANVPGDIPAIGFISHVDTSPDCSGKNVNPQIVENYRGGDIALGVGDEVLSPVMFPVLHQLLGQTLITTDGKTLLGADDKAGIAEIMTALAVLQQKNIPHGDIRVAFTPDEEVGKGAKHFDVDAFDARWAYTVDGGGVGELEFENFNAASVNIKIVGNNVHPGTAKGVMVNALSLAARIHAEVPADESPEMTEGYEGFYHLASMKGTVERADMHYIIRDFDRKQFEARKRKMMEIAKKVGKGLHPDCYIELVIEDSYYNMREKVAEHPHILDIAQQAMRDCGIEPQLKPIRGGTDGAQLSFMGLPCPNLFTGGYNYHGKHEFVTLEGMEKAVRVIVRIAELTAKQN.

Zn(2+) is bound at residue His78. The active site involves Asp80. Asp140 is a Zn(2+) binding site. Glu173 acts as the Proton acceptor in catalysis. Zn(2+)-binding residues include Glu174, Asp196, and His379.

The protein belongs to the peptidase M20B family. Zn(2+) is required as a cofactor.

It is found in the cytoplasm. The enzyme catalyses Release of the N-terminal residue from a tripeptide.. Its function is as follows. Cleaves the N-terminal amino acid of tripeptides. This is Peptidase T from Escherichia fergusonii (strain ATCC 35469 / DSM 13698 / CCUG 18766 / IAM 14443 / JCM 21226 / LMG 7866 / NBRC 102419 / NCTC 12128 / CDC 0568-73).